The primary structure comprises 249 residues: Putative adhesin RC1281 (249 aa).

Residues 1-22 form the signal peptide; sequence MKKLLLIAAASTALLTSGLSFA.

In terms of biological role, adheres to biotinylated epithelial (Vero cell) proteins. This Rickettsia conorii (strain ATCC VR-613 / Malish 7) protein is Putative adhesin RC1281.